The primary structure comprises 1456 residues: Alpha-2-macroglobulin-like protein 1 (1456 aa).

The N-terminal stretch at 1–19 (MVPTILLSALLLHFTDVVA) is a signal peptide. Asn48, Asn172, and Asn868 each carry an N-linked (GlcNAc...) asparagine glycan.

The protein belongs to the protease inhibitor I39 (alpha-2-macroglobulin) family. As to quaternary structure, homotetramer; consists of two dimer pairs that are disulfide-linked. Part of a complex composed of complement component C3, CLCA1/CLCA3, A2ML1/OH and ALB/serum albumin.

It localises to the secreted. Its function is as follows. Inhibits protease gelatinolytic complex activity against type 1 collagen. The polypeptide is Alpha-2-macroglobulin-like protein 1 (Mus musculus (Mouse)).